We begin with the raw amino-acid sequence, 109 residues long: uncharacterized protein (109 aa).

The disordered stretch occupies residues 36–109 (NSSNNLNNNN…KKKKKKRRVK (74 aa)). Residues 39–88 (NNLNNNNFNENNLKNNNNRNGNNNNNNNNNNNNNNNNNNNNNNNNNNNNN) are compositionally biased toward low complexity. Basic residues predominate over residues 99-109 (QKKKKKKRRVK).

This is an uncharacterized protein from Dictyostelium discoideum (Social amoeba).